We begin with the raw amino-acid sequence, 185 residues long: Large ribosomal subunit protein uL30 (185 aa).

It belongs to the universal ribosomal protein uL30 family. In terms of assembly, part of the 50S ribosomal subunit.

The polypeptide is Large ribosomal subunit protein uL30 (Caldivirga maquilingensis (strain ATCC 700844 / DSM 13496 / JCM 10307 / IC-167)).